The sequence spans 128 residues: Probable cystatin-15 (128 aa).

The signal sequence occupies residues Met1 to Ser20. A disulfide bridge links Cys82 with Cys92. N-linked (GlcNAc...) asparagine glycosylation is present at Asn104. A disulfide bond links Cys105 and Cys125.

The protein belongs to the cystatin family.

The protein localises to the secreted. In Bos taurus (Bovine), this protein is Probable cystatin-15.